The sequence spans 250 residues: Triosephosphate isomerase (250 aa).

Residue 9–11 (NWK) coordinates substrate. His94 acts as the Electrophile in catalysis. Glu166 (proton acceptor) is an active-site residue. Residues Gly172, Ser211, and 232–233 (GG) contribute to the substrate site.

Belongs to the triosephosphate isomerase family. As to quaternary structure, homodimer.

It localises to the cytoplasm. It catalyses the reaction D-glyceraldehyde 3-phosphate = dihydroxyacetone phosphate. Its pathway is carbohydrate biosynthesis; gluconeogenesis. It functions in the pathway carbohydrate degradation; glycolysis; D-glyceraldehyde 3-phosphate from glycerone phosphate: step 1/1. Its function is as follows. Involved in the gluconeogenesis. Catalyzes stereospecifically the conversion of dihydroxyacetone phosphate (DHAP) to D-glyceraldehyde-3-phosphate (G3P). This Methylococcus capsulatus (strain ATCC 33009 / NCIMB 11132 / Bath) protein is Triosephosphate isomerase.